The sequence spans 258 residues: Ribosomal RNA large subunit methyltransferase E (258 aa).

5 residues coordinate S-adenosyl-L-methionine: Gly58, Trp60, Asp78, Asp96, and Asp120. The active-site Proton acceptor is Lys160.

The protein belongs to the class I-like SAM-binding methyltransferase superfamily. RNA methyltransferase RlmE family.

Its subcellular location is the cytoplasm. The catalysed reaction is uridine(2552) in 23S rRNA + S-adenosyl-L-methionine = 2'-O-methyluridine(2552) in 23S rRNA + S-adenosyl-L-homocysteine + H(+). In terms of biological role, specifically methylates the uridine in position 2552 of 23S rRNA at the 2'-O position of the ribose in the fully assembled 50S ribosomal subunit. The polypeptide is Ribosomal RNA large subunit methyltransferase E (Methanococcus maripaludis (strain C7 / ATCC BAA-1331)).